The primary structure comprises 347 residues: Probable magnetosome protein Mms36 (347 aa).

The chain crosses the membrane as a helical span at residues 25-45 (VLVLYLAIAVVVAVLAWPWLA).

It localises to the magnetosome membrane. Its function is as follows. The 4 genes of this operon collectively influence magnetosome size and number. The sequence is that of Probable magnetosome protein Mms36 from Magnetospirillum gryphiswaldense (strain DSM 6361 / JCM 21280 / NBRC 15271 / MSR-1).